The following is a 210-amino-acid chain: LexA repressor (210 aa).

The segment at residues 25–44 is a DNA-binding region (H-T-H motif); sequence AGQVAQEVGITKQAISQQVN. Residues Ser-120 and Lys-159 each act as for autocatalytic cleavage activity in the active site.

Belongs to the peptidase S24 family. In terms of assembly, homodimer.

It catalyses the reaction Hydrolysis of Ala-|-Gly bond in repressor LexA.. In terms of biological role, represses a number of genes involved in the response to DNA damage (SOS response), including recA and lexA. In the presence of single-stranded DNA, RecA interacts with LexA causing an autocatalytic cleavage which disrupts the DNA-binding part of LexA, leading to derepression of the SOS regulon and eventually DNA repair. This chain is LexA repressor, found in Deinococcus radiodurans (strain ATCC 13939 / DSM 20539 / JCM 16871 / CCUG 27074 / LMG 4051 / NBRC 15346 / NCIMB 9279 / VKM B-1422 / R1).